Here is a 417-residue protein sequence, read N- to C-terminus: Phosphoribosylamine--glycine ligase (417 aa).

Residues lysine 107–glutamate 313 enclose the ATP-grasp domain. Leucine 133–serine 194 lines the ATP pocket. Mg(2+) is bound by residues glutamate 283 and asparagine 285.

This sequence belongs to the GARS family. It depends on Mg(2+) as a cofactor. The cofactor is Mn(2+).

The catalysed reaction is 5-phospho-beta-D-ribosylamine + glycine + ATP = N(1)-(5-phospho-beta-D-ribosyl)glycinamide + ADP + phosphate + H(+). The protein operates within purine metabolism; IMP biosynthesis via de novo pathway; N(1)-(5-phospho-D-ribosyl)glycinamide from 5-phospho-alpha-D-ribose 1-diphosphate: step 2/2. This is Phosphoribosylamine--glycine ligase from Caldanaerobacter subterraneus subsp. tengcongensis (strain DSM 15242 / JCM 11007 / NBRC 100824 / MB4) (Thermoanaerobacter tengcongensis).